The primary structure comprises 116 residues: Endoribonuclease EndoA (116 aa).

Belongs to the PemK/MazF family. Homodimer. Forms a complex with antitoxin EndoAI in which the toxin activity is inhibited. One dimer binds a ssRNA substrate, forms a heterohexamer composed of alternating toxin and antitoxin homodimers which inhibits the endoribonuclease activity. Antitoxin prevents RNA binding to the endoribonuclease.

Its function is as follows. Toxic component of a type II toxin-antitoxin (TA) system. Specific for 5'-UACAU-3' sequences, cleaving after the first U. Yields cleavage products with 3' phosphate and 5' hydroxyl groups. Cannot digest substrate with a UUdUACAUAA cleavage site. Overexpression is toxic for cell growth (shown in E.coli), probably by inhibiting protein synthesis through the cleavage of single-stranded RNA. The toxicity is reversed by the antitoxin EndoAI. Toxin activity cannot be inhibited by MazE from E.coli. The EndoA-EndoAI complex does not seem to bind its own promoter. This is Endoribonuclease EndoA from Bacillus subtilis (strain 168).